Reading from the N-terminus, the 309-residue chain is Ribosomal protein L11 methyltransferase (309 aa).

Residues Thr-144, Gly-165, Asp-187, and Asn-235 each coordinate S-adenosyl-L-methionine.

It belongs to the methyltransferase superfamily. PrmA family.

It localises to the cytoplasm. It carries out the reaction L-lysyl-[protein] + 3 S-adenosyl-L-methionine = N(6),N(6),N(6)-trimethyl-L-lysyl-[protein] + 3 S-adenosyl-L-homocysteine + 3 H(+). Functionally, methylates ribosomal protein L11. The polypeptide is Ribosomal protein L11 methyltransferase (Prochlorococcus marinus (strain MIT 9215)).